Reading from the N-terminus, the 81-residue chain is Short neurotoxin 1 (81 aa).

The N-terminal stretch at 1–21 is a signal peptide; it reads MKTLLLTLVVVTIVFLDLGYT. Intrachain disulfides connect C24/C43, C38/C60, C62/C73, and C74/C79.

It belongs to the three-finger toxin family. Short-chain subfamily. Type I alpha-neurotoxin sub-subfamily. As to expression, expressed by the venom gland.

It is found in the secreted. Its function is as follows. Binds to muscle nicotinic acetylcholine receptor (nAChR) and inhibit acetylcholine from binding to the receptor, thereby impairing neuromuscular transmission. The polypeptide is Short neurotoxin 1 (Notechis scutatus scutatus (Mainland tiger snake)).